A 37-amino-acid chain; its full sequence is Photosystem I reaction center subunit VIII (37 aa).

A helical membrane pass occupies residues 9-29; it reads SIFVPLVGLVFPAIAMASLFL.

The protein belongs to the PsaI family.

It is found in the plastid. The protein resides in the chloroplast thylakoid membrane. Its function is as follows. May help in the organization of the PsaL subunit. In Cucumis sativus (Cucumber), this protein is Photosystem I reaction center subunit VIII.